The following is a 142-amino-acid chain: MVRALAQGTFDLLHPGHIHYLEEAARMGDELYVIVARSANVTHKRAPVLDGRQRRDMIGALEVVDHALLGHESDIFVPIEEIDPDVIVLGHDQHHDEAAIERALGDRGIDCGVRRASPRDPAYDGELLSTGRIVDRICERRC.

ATP-binding positions include 9–10 (TF), 14–17 (HPGH), and D92.

Belongs to the archaeal FAD synthase family. As to quaternary structure, homodimer. A divalent metal cation is required as a cofactor.

It carries out the reaction FMN + ATP + H(+) = FAD + diphosphate. It functions in the pathway cofactor biosynthesis; FAD biosynthesis; FAD from FMN: step 1/1. Its function is as follows. Catalyzes the transfer of the AMP portion of ATP to flavin mononucleotide (FMN) to produce flavin adenine dinucleotide (FAD) coenzyme. In Halalkalicoccus jeotgali (strain DSM 18796 / CECT 7217 / JCM 14584 / KCTC 4019 / B3), this protein is FAD synthase.